A 159-amino-acid chain; its full sequence is uncharacterized protein (159 aa).

Disordered stretches follow at residues 1 to 29 and 114 to 159; these read MHQTHAIQRLEVLPSFSNESPTSRETSES and TRGG…NENT. The segment covering 15–29 has biased composition (polar residues); that stretch reads SFSNESPTSRETSES.

This is an uncharacterized protein from Homo sapiens (Human).